Here is a 414-residue protein sequence, read N- to C-terminus: FAD-dependent monooxygenase adaC (414 aa).

5 residues coordinate FAD: Glu32, Ala43, Arg115, Asp325, and Gly338.

It belongs to the paxM FAD-dependent monooxygenase family. It depends on FAD as a cofactor.

It catalyses the reaction 3-(2,4-dioxopentyl)-3,6,8,9-tetrahydroxy-1-oxo-1,2,3,4-tetrahydroanthracene-2-carboxyl-[ACP] + NADPH + O2 + H(+) = 3-(2,4-dioxopentyl)-2,3,6,8,9-pentahydroxy-1-oxo-1,2,3,4-tetrahydroanthracene-2-carboxyl-[ACP] + NADP(+) + H2O. It functions in the pathway secondary metabolite biosynthesis. Functionally, FAD-dependent monooxygenase; part of the gene cluster that mediates the biosynthesis of the linear tetracyclic TAN-1612 neuropeptide Y receptor antagonist. The decaketide backbone of TAN-1612 is synthesized by the non-reducing polyketide synthase adaA via condensation of one acetyl-CoA starter unit with 9 malonyl-CoA units. The FAD-dependent monooxygenase adaC then performs hydroxylation at C2 while the polaketide chain is still attached to the NRPKS adaA. The alpha-hydroxylation step at C2 appears to be crucial for the following C18-C1 Claisen cyclization and release of the C9-hydroxyl version of TAN-1612 from the NRPKS adaA, two steps performed by the lactamase-like protein adaB. Finally, the O-methyltransferase adaD performs the C9 O-methylation to complete the biosynthesis of TAN-1612. The chain is FAD-dependent monooxygenase adaC from Aspergillus niger.